A 129-amino-acid polypeptide reads, in one-letter code: Phosphoribosyl-AMP cyclohydrolase (129 aa).

Residue Asp94 participates in Mg(2+) binding. Residue Cys95 participates in Zn(2+) binding. Residues Asp96 and Asp98 each contribute to the Mg(2+) site. 2 residues coordinate Zn(2+): Cys111 and Cys118.

It belongs to the PRA-CH family. Homodimer. Mg(2+) is required as a cofactor. Zn(2+) serves as cofactor.

Its subcellular location is the cytoplasm. It carries out the reaction 1-(5-phospho-beta-D-ribosyl)-5'-AMP + H2O = 1-(5-phospho-beta-D-ribosyl)-5-[(5-phospho-beta-D-ribosylamino)methylideneamino]imidazole-4-carboxamide. Its pathway is amino-acid biosynthesis; L-histidine biosynthesis; L-histidine from 5-phospho-alpha-D-ribose 1-diphosphate: step 3/9. Functionally, catalyzes the hydrolysis of the adenine ring of phosphoribosyl-AMP. The polypeptide is Phosphoribosyl-AMP cyclohydrolase (Corynebacterium efficiens (strain DSM 44549 / YS-314 / AJ 12310 / JCM 11189 / NBRC 100395)).